Here is a 647-residue protein sequence, read N- to C-terminus: Threonine--tRNA ligase (647 aa).

The region spanning 1–61 (MINITFPDGA…TEDGSIEIVT (61 aa)) is the TGS domain. The segment at 242–540 (DHRKLGKELD…LIENYKGAFP (299 aa)) is catalytic. Zn(2+)-binding residues include Cys336, His387, and His517.

This sequence belongs to the class-II aminoacyl-tRNA synthetase family. Homodimer. Zn(2+) is required as a cofactor.

The protein resides in the cytoplasm. It catalyses the reaction tRNA(Thr) + L-threonine + ATP = L-threonyl-tRNA(Thr) + AMP + diphosphate + H(+). Catalyzes the attachment of threonine to tRNA(Thr) in a two-step reaction: L-threonine is first activated by ATP to form Thr-AMP and then transferred to the acceptor end of tRNA(Thr). Also edits incorrectly charged L-seryl-tRNA(Thr). In Streptococcus pneumoniae serotype 19F (strain G54), this protein is Threonine--tRNA ligase.